A 62-amino-acid chain; its full sequence is Photosystem II reaction center protein Z (62 aa).

A run of 2 helical transmembrane segments spans residues 8 to 28 (ALAA…VAYA) and 41 to 61 (FLGS…NFLV).

This sequence belongs to the PsbZ family. In terms of assembly, PSII is composed of 1 copy each of membrane proteins PsbA, PsbB, PsbC, PsbD, PsbE, PsbF, PsbH, PsbI, PsbJ, PsbK, PsbL, PsbM, PsbT, PsbX, PsbY, PsbZ, Psb30/Ycf12, peripheral proteins PsbO, CyanoQ (PsbQ), PsbU, PsbV and a large number of cofactors. It forms dimeric complexes.

The protein localises to the cellular thylakoid membrane. Functionally, may control the interaction of photosystem II (PSII) cores with the light-harvesting antenna, regulates electron flow through the 2 photosystem reaction centers. PSII is a light-driven water plastoquinone oxidoreductase, using light energy to abstract electrons from H(2)O, generating a proton gradient subsequently used for ATP formation. The polypeptide is Photosystem II reaction center protein Z (Cyanothece sp. (strain PCC 7425 / ATCC 29141)).